The chain runs to 428 residues: Putative zinc finger protein 355P (428 aa).

The region spanning 1 to 64 (MRDEVAEKEK…KHPGLTQHNI (64 aa)) is the KRAB domain. 3 consecutive C2H2-type zinc fingers follow at residues 72-94 (YKCK…QRIH), 100-122 (YKCE…MRAH), and 128-150 (YKCE…KRIH). Residues 156–178 (YKFEECDKAFYWVLSFTKHMIIH) form a C2H2-type 4; degenerate zinc finger. The C2H2-type 5; degenerate zinc finger occupies 184–206 (YKYQECGKAFKWSSNLTIHKRIH). A C2H2-type 6; degenerate zinc finger spans residues 212–234 (CKCEECGKACKQSLGLTIQKRIH). A C2H2-type 7; degenerate zinc finger spans residues 263–285 (YNCEKCGKAFYCSSNLIQNNIVH). 2 consecutive C2H2-type zinc fingers follow at residues 291–313 (YKCQ…KIIH) and 335–357 (YKCE…MIVH). A C2H2-type 10; degenerate zinc finger spans residues 363 to 385 (YKCEECGKAFKWSSELTIHQRIR). The segment at 391 to 413 (YKCEECVRVFKHSSKLNEHKRNH) adopts a C2H2-type 11 zinc-finger fold.

Belongs to the krueppel C2H2-type zinc-finger protein family.

It localises to the nucleus. Its function is as follows. May be involved in transcriptional regulation. This Homo sapiens (Human) protein is Putative zinc finger protein 355P (ZNF355P).